A 122-amino-acid polypeptide reads, in one-letter code: Small ribosomal subunit protein uS13 (122 aa).

The tract at residues 95–122 (GLPVRGQRTHTNARTRKGKAKPIAGKKK) is disordered.

Belongs to the universal ribosomal protein uS13 family. As to quaternary structure, part of the 30S ribosomal subunit. Forms a loose heterodimer with protein S19. Forms two bridges to the 50S subunit in the 70S ribosome.

In terms of biological role, located at the top of the head of the 30S subunit, it contacts several helices of the 16S rRNA. In the 70S ribosome it contacts the 23S rRNA (bridge B1a) and protein L5 of the 50S subunit (bridge B1b), connecting the 2 subunits; these bridges are implicated in subunit movement. Contacts the tRNAs in the A and P-sites. This chain is Small ribosomal subunit protein uS13, found in Zymomonas mobilis subsp. mobilis (strain ATCC 31821 / ZM4 / CP4).